The following is a 575-amino-acid chain: Muellerian-inhibiting factor (575 aa).

The N-terminal stretch at 1–20 is a signal peptide; the sequence is MQGPSLSQLVLVLMGALLEA. A propeptide spanning residues 21-466 is cleaved from the precursor; sequence GTPREEVSST…ERSGPARAQR (446 aa). Asparagine 78 and asparagine 343 each carry an N-linked (GlcNAc...) asparagine glycan. 3 cysteine pairs are disulfide-bonded: cysteine 477–cysteine 541, cysteine 503–cysteine 572, and cysteine 507–cysteine 574.

The protein belongs to the TGF-beta family. In terms of assembly, homodimer; disulfide-linked. Post-translationally, preproprotein is proteolytically processed to generate N- and C-terminal cleavage products that homodimerize and associate to form a biologically active non-covalent complex. Binding of the non-covalent complex to AMHR2 induces dissociation of the pro-region from the mature C-terminal dimer. The N-terminal portion of the protein, despite having no intrinsic activity, has the role of amplifying the activity of the C-terminus. In terms of tissue distribution, detected in fetal Sertoli cells. Expressed in granulosa cells of growing follicles but also in theca cells of preovulatory follicles and corpora lutea (at protein level).

It localises to the secreted. Functionally, plays an important role in several reproductive functions. Induces Muellerian duct regression during male fetal sexual differentiation and plays a role in Leydig cell differentiation and function. In female acts as a negative regulator of the primordial to primary follicle transition and decreases FSH sensitivity of growing follicles. AMH signals by binding to a specific type-II receptor, AMHR2, that heterodimerizes with type-I receptors (ACVR1 and BMPR1A), and recruiting SMAD proteins that are translocated to the nucleus to regulate target gene expression. The sequence is that of Muellerian-inhibiting factor (AMH) from Sus scrofa (Pig).